The sequence spans 1178 residues: Phosphate system positive regulatory protein PHO81 (1178 aa).

The SPX domain occupies 1–169 (MKFGKYLEAR…QSHDKDFYLA (169 aa)). The disordered stretch occupies residues 210-250 (QSSTFTNDDDDDNNTSNNNKHNNNNNNNNNNNNNNNNNNIL). The segment covering 223–250 (NTSNNNKHNNNNNNNNNNNNNNNNNNIL) has biased composition (low complexity). 6 ANK repeats span residues 423–452 (HSRV…LEDV), 458–487 (DSKT…ANAS), 506–535 (VQFD…KQNA), 556–586 (TGLC…DPNE), 591–620 (NKWT…RLDI), and 624–653 (NGHS…NLPS). In terms of domain architecture, GP-PDE spans 871 to 1178 (IINYEPYWKS…ELLFENNIDM (308 aa)). Residue serine 956 is modified to Phosphoserine.

Associates specifically with the PHO80-PHO85 and PCL7-PHO85 cyclin-CDK complexes, and much of this interaction is mediated through the PHO80 and PCL7 cyclin subunits. Interacts with the transcription factor PHO4. Post-translationally, phosphorylated by the cyclin-CDK PHO80-PHO85. Phosphorylation mediates the formation of a stable interaction with the cyclin-CDK and is required for function as an active inhibitor of the complex under phosphate starvation conditions.

The protein localises to the cytoplasm. It is found in the nucleus. Its function is as follows. Inhibits the kinase activity of the cyclin-CDKs PHO80-PHO85 and PCL7-PHO85 under low-phosphate conditions. This is Phosphate system positive regulatory protein PHO81 (PHO81) from Saccharomyces cerevisiae (strain ATCC 204508 / S288c) (Baker's yeast).